We begin with the raw amino-acid sequence, 257 residues long: GTP cyclohydrolase FolE2 (257 aa).

This sequence belongs to the GTP cyclohydrolase IV family.

It carries out the reaction GTP + H2O = 7,8-dihydroneopterin 3'-triphosphate + formate + H(+). Its pathway is cofactor biosynthesis; 7,8-dihydroneopterin triphosphate biosynthesis; 7,8-dihydroneopterin triphosphate from GTP: step 1/1. In terms of biological role, converts GTP to 7,8-dihydroneopterin triphosphate. The sequence is that of GTP cyclohydrolase FolE2 from Dictyoglomus turgidum (strain DSM 6724 / Z-1310).